We begin with the raw amino-acid sequence, 32 residues long: Cytochrome c3, 10 kDa (32 aa).

Heme-binding residues include histidine 16, cysteine 25, cysteine 28, and histidine 29.

Monomer. Post-translationally, binds 1 heme group per subunit.

The protein resides in the periplasm. Its function is as follows. Participates in sulfate respiration coupled with phosphorylation by transferring electrons from the enzyme dehydrogenase to ferredoxin. This Desulfuromonas acetoxidans (Chloropseudomonas ethylica) protein is Cytochrome c3, 10 kDa.